The chain runs to 1260 residues: Kinesin-like protein KIN-14E (1260 aa).

Residues 115-274 (FQKDPIPTSL…PGREEIEALL (160 aa)) form the MyTH4 domain. An FERM domain is found at 279–593 (LTTIVFFLDE…HINDVMLRRY (315 aa)). 2 coiled-coil regions span residues 615–676 (QNFE…LLEV) and 753–853 (SKRL…TAAI). One can recognise a Kinesin motor domain in the interval 888–1209 (KIRVYCRIRP…LLYASRVRTI (322 aa)). Residue 972–977 (GSGKTF) participates in ATP binding. The segment at 1217-1239 (ISSKEMVRLKKLVAYWKEQAGKK) is calmodulin-binding. The tract at residues 1221–1260 (EMVRLKKLVAYWKEQAGKKGEEEDLVDIEEDRTRKDEADS) is homodimerization domain. Positions 1236-1260 (AGKKGEEEDLVDIEEDRTRKDEADS) are disordered. Basic and acidic residues predominate over residues 1251 to 1260 (DRTRKDEADS).

Belongs to the TRAFAC class myosin-kinesin ATPase superfamily. Kinesin family. KIN-14 subfamily. As to quaternary structure, homodimer (via C-terminus). Binds microtubules via its N-terminus containing the MyTH4 domain and binds F-actin via its FERM domain. Interacts with KIPK1. Interacts with KIPK2. Interacts with AN. Interacts with AIR9. Interacts (via C-terminus) with KIC, CAM2, CAM4 and CAM6. KIC and calmodulin show competitive binding to KCBP. Binding to calmodulin inhibits microtubule binding activity. Binding to KIC inhibits microtubule binding activity and microtubule-stimulated ATPase activity. As to expression, widely expressed with the highest levels in flowers. Strongly expressed in the root tip. Highly detected in the branch apex of the trichome.

It is found in the cytoplasm. Its subcellular location is the cell cortex. The protein resides in the cytoskeleton. It localises to the spindle. The protein localises to the phragmoplast. Functionally, minus-end microtubule-dependent motor protein involved in the regulation of cell division and trichome morphogenesis through microtubules bundling. Possesses basal and microtubule-stimulated ATPase activities. Acts as a hub that brings together microtubules and actin filaments to modulate the cytoskeleton during trichome formation and morphogenesis. Could be involved in the negative regulation of root growth. The chain is Kinesin-like protein KIN-14E from Arabidopsis thaliana (Mouse-ear cress).